A 144-amino-acid polypeptide reads, in one-letter code: Glutamyl-tRNA(Gln) amidotransferase subunit C, mitochondrial (144 aa).

The transit peptide at 1–17 directs the protein to the mitochondrion; the sequence is MFRRSVSFVRSHVLRSF.

This sequence belongs to the GatC family. As to quaternary structure, subunit of the heterotrimeric GatCAB amidotransferase (AdT) complex, composed of A, B and C subunits.

Its subcellular location is the mitochondrion. The catalysed reaction is L-glutamyl-tRNA(Gln) + L-glutamine + ATP + H2O = L-glutaminyl-tRNA(Gln) + L-glutamate + ADP + phosphate + H(+). Functionally, allows the formation of correctly charged Gln-tRNA(Gln) through the transamidation of misacylated Glu-tRNA(Gln) in the mitochondria. The reaction takes place in the presence of glutamine and ATP through an activated gamma-phospho-Glu-tRNA(Gln). This is Glutamyl-tRNA(Gln) amidotransferase subunit C, mitochondrial from Ixodes scapularis (Black-legged tick).